A 443-amino-acid polypeptide reads, in one-letter code: Exodeoxyribonuclease 7 large subunit (443 aa).

The protein belongs to the XseA family. In terms of assembly, heterooligomer composed of large and small subunits.

It is found in the cytoplasm. The catalysed reaction is Exonucleolytic cleavage in either 5'- to 3'- or 3'- to 5'-direction to yield nucleoside 5'-phosphates.. In terms of biological role, bidirectionally degrades single-stranded DNA into large acid-insoluble oligonucleotides, which are then degraded further into small acid-soluble oligonucleotides. The chain is Exodeoxyribonuclease 7 large subunit from Vibrio parahaemolyticus serotype O3:K6 (strain RIMD 2210633).